Reading from the N-terminus, the 210-residue chain is Putative 4-hydroxy-4-methyl-2-oxoglutarate aldolase (210 aa).

Substrate contacts are provided by residues 87-90 and Arg-109; that span reads GDFV. Asp-110 is an a divalent metal cation binding site.

Belongs to the class II aldolase/RraA-like family. Homotrimer. A divalent metal cation serves as cofactor.

It catalyses the reaction 4-hydroxy-4-methyl-2-oxoglutarate = 2 pyruvate. The enzyme catalyses oxaloacetate + H(+) = pyruvate + CO2. Its function is as follows. Catalyzes the aldol cleavage of 4-hydroxy-4-methyl-2-oxoglutarate (HMG) into 2 molecules of pyruvate. Also contains a secondary oxaloacetate (OAA) decarboxylase activity due to the common pyruvate enolate transition state formed following C-C bond cleavage in the retro-aldol and decarboxylation reactions. The polypeptide is Putative 4-hydroxy-4-methyl-2-oxoglutarate aldolase (Halalkalibacterium halodurans (strain ATCC BAA-125 / DSM 18197 / FERM 7344 / JCM 9153 / C-125) (Bacillus halodurans)).